The following is a 248-amino-acid chain: Tyrosine recombinase XerD-like (248 aa).

In terms of domain architecture, Core-binding (CB) spans 1-72; it reads MIAFIEPFLA…TVNQFLYYLY (72 aa). A Tyr recombinase domain is found at 92–248; it reads SLKPQLTRLD…PITLEKYYKM (157 aa). R213 is an active-site residue. Y245 acts as the O-(3'-phospho-DNA)-tyrosine intermediate in catalysis.

It belongs to the 'phage' integrase family. XerD-like subfamily.

The protein localises to the cytoplasm. Its function is as follows. Putative tyrosine recombinase. Not involved in the cutting and rejoining of the recombining DNA molecules on dif(SL) site. This Streptococcus equi subsp. zooepidemicus (strain H70) protein is Tyrosine recombinase XerD-like.